Consider the following 157-residue polypeptide: Mini-ribonuclease 3 (157 aa).

Aspartate 18 is a catalytic residue. A disordered region spans residues glutamate 126–cysteine 157. Over residues glycine 130 to glutamate 141 the composition is skewed to basic and acidic residues.

The protein belongs to the MrnC RNase family. In terms of assembly, homodimer. The cofactor is Mg(2+).

It localises to the cytoplasm. In terms of biological role, involved in correct processing of both the 5' and 3' ends of 23S rRNA precursor. Processes 30S rRNA precursor transcript even in absence of ribonuclease 3 (Rnc); Rnc processes 30S rRNA into smaller rRNA precursors. The sequence is that of Mini-ribonuclease 3 from Desulfitobacterium hafniense (strain Y51).